A 333-amino-acid polypeptide reads, in one-letter code: Phosphate acyltransferase (333 aa).

It belongs to the PlsX family. In terms of assembly, homodimer. Probably interacts with PlsY.

The protein resides in the cytoplasm. It carries out the reaction a fatty acyl-[ACP] + phosphate = an acyl phosphate + holo-[ACP]. It participates in lipid metabolism; phospholipid metabolism. Functionally, catalyzes the reversible formation of acyl-phosphate (acyl-PO(4)) from acyl-[acyl-carrier-protein] (acyl-ACP). This enzyme utilizes acyl-ACP as fatty acyl donor, but not acyl-CoA. The protein is Phosphate acyltransferase of Thermosipho melanesiensis (strain DSM 12029 / CIP 104789 / BI429).